The chain runs to 461 residues: Acetylcholine receptor subunit alpha (461 aa).

Positions 1 to 24 (MILCSYWHVGLVLLLFSCCGLVLG) are cleaved as a signal peptide. Residues 25–234 (SEHETRLVAN…ITYHFIMQRI (210 aa)) are Extracellular-facing. Disulfide bonds link Cys-152–Cys-166 and Cys-216–Cys-217. N-linked (GlcNAc...) asparagine glycosylation is present at Asn-165. Helical transmembrane passes span 235-259 (PLYFVVNVIIPCLLFSFLTGLVFYL), 267-285 (MTLSISVLLSLTVFLLVIV), and 301-320 (YMLFTMIFVISSIIITVVVI). Residues 321 to 432 (NTHHRSPSTH…WKYVAMVIDH (112 aa)) lie on the Cytoplasmic side of the membrane. A helical transmembrane segment spans residues 433–451 (ILLCVFMLICIIGTVSVFA).

Belongs to the ligand-gated ion channel (TC 1.A.9) family. Acetylcholine receptor (TC 1.A.9.1) subfamily. Alpha-1/CHRNA1 sub-subfamily. As to quaternary structure, pentamer of two alpha chains, and one each of the beta, delta, and gamma chains.

Its subcellular location is the postsynaptic cell membrane. It is found in the cell membrane. The catalysed reaction is K(+)(in) = K(+)(out). The enzyme catalyses Na(+)(in) = Na(+)(out). Functionally, upon acetylcholine binding, the AChR responds by an extensive change in conformation that affects all subunits and leads to opening of an ion-conducting channel across the plasma membrane. The chain is Acetylcholine receptor subunit alpha (CHRNA1) from Tetronarce californica (Pacific electric ray).